The sequence spans 91 residues: Large ribosomal subunit protein bL27 (91 aa).

Belongs to the bacterial ribosomal protein bL27 family. In terms of assembly, part of the 50S ribosomal subunit. Contacts protein L18.

In terms of biological role, binds the 5S and 23S rRNAs and also the tRNA in the P site. This chain is Large ribosomal subunit protein bL27 (rpmA), found in Deinococcus radiodurans (strain ATCC 13939 / DSM 20539 / JCM 16871 / CCUG 27074 / LMG 4051 / NBRC 15346 / NCIMB 9279 / VKM B-1422 / R1).